The chain runs to 308 residues: Thymidylate synthase (308 aa).

DUMP contacts are provided by residues Arg26 and 170 to 171 (RR). The active-site Nucleophile is the Cys190. DUMP contacts are provided by residues 210 to 213 (RSCD), Asn221, and 251 to 253 (HVY). Position 213 (Asp213) interacts with (6R)-5,10-methylene-5,6,7,8-tetrahydrofolate. (6R)-5,10-methylene-5,6,7,8-tetrahydrofolate is bound at residue Ala307.

This sequence belongs to the thymidylate synthase family. Bacterial-type ThyA subfamily. Homodimer.

The protein localises to the cytoplasm. The catalysed reaction is dUMP + (6R)-5,10-methylene-5,6,7,8-tetrahydrofolate = 7,8-dihydrofolate + dTMP. It functions in the pathway pyrimidine metabolism; dTTP biosynthesis. In terms of biological role, catalyzes the reductive methylation of 2'-deoxyuridine-5'-monophosphate (dUMP) to 2'-deoxythymidine-5'-monophosphate (dTMP) while utilizing 5,10-methylenetetrahydrofolate (mTHF) as the methyl donor and reductant in the reaction, yielding dihydrofolate (DHF) as a by-product. This enzymatic reaction provides an intracellular de novo source of dTMP, an essential precursor for DNA biosynthesis. This Rhizorhabdus wittichii (strain DSM 6014 / CCUG 31198 / JCM 15750 / NBRC 105917 / EY 4224 / RW1) (Sphingomonas wittichii) protein is Thymidylate synthase.